Reading from the N-terminus, the 105-residue chain is Protein RALF-like 21 (105 aa).

Positions 1 to 30 are cleaved as a signal peptide; that stretch reads MSNMKITNRFMLVATFIACVFISSMNMTVG. Cystine bridges form between C44/C53 and C67/C73.

This sequence belongs to the plant rapid alkalinization factor (RALF) family. In terms of tissue distribution, expressed in seeds and rosettes.

Its subcellular location is the secreted. In terms of biological role, cell signaling peptide that may regulate plant stress, growth, and development. Mediates a rapid alkalinization of extracellular space by mediating a transient increase in the cytoplasmic Ca(2+) concentration leading to a calcium-dependent signaling events through a cell surface receptor and a concomitant activation of some intracellular mitogen-activated protein kinases. This is Protein RALF-like 21 (RALFL21) from Arabidopsis thaliana (Mouse-ear cress).